Here is a 377-residue protein sequence, read N- to C-terminus: Queuine tRNA-ribosyltransferase (377 aa).

Asp-89 (proton acceptor) is an active-site residue. Residues 89 to 93 (DSGGF), Asp-143, Gln-187, and Gly-214 contribute to the substrate site. Residues 245–251 (GVGKPED) form an RNA binding region. Asp-264 functions as the Nucleophile in the catalytic mechanism. The segment at 269–273 (TRNAR) is RNA binding; important for wobble base 34 recognition. Zn(2+) is bound by residues Cys-302, Cys-304, Cys-307, and His-333.

The protein belongs to the queuine tRNA-ribosyltransferase family. In terms of assembly, homodimer. Within each dimer, one monomer is responsible for RNA recognition and catalysis, while the other monomer binds to the replacement base PreQ1. Requires Zn(2+) as cofactor.

It catalyses the reaction 7-aminomethyl-7-carbaguanine + guanosine(34) in tRNA = 7-aminomethyl-7-carbaguanosine(34) in tRNA + guanine. It participates in tRNA modification; tRNA-queuosine biosynthesis. Its function is as follows. Catalyzes the base-exchange of a guanine (G) residue with the queuine precursor 7-aminomethyl-7-deazaguanine (PreQ1) at position 34 (anticodon wobble position) in tRNAs with GU(N) anticodons (tRNA-Asp, -Asn, -His and -Tyr). Catalysis occurs through a double-displacement mechanism. The nucleophile active site attacks the C1' of nucleotide 34 to detach the guanine base from the RNA, forming a covalent enzyme-RNA intermediate. The proton acceptor active site deprotonates the incoming PreQ1, allowing a nucleophilic attack on the C1' of the ribose to form the product. After dissociation, two additional enzymatic reactions on the tRNA convert PreQ1 to queuine (Q), resulting in the hypermodified nucleoside queuosine (7-(((4,5-cis-dihydroxy-2-cyclopenten-1-yl)amino)methyl)-7-deazaguanosine). The polypeptide is Queuine tRNA-ribosyltransferase (Shewanella sediminis (strain HAW-EB3)).